Reading from the N-terminus, the 917-residue chain is GTPase-activating Rap/Ran-GAP domain-like protein 3 (917 aa).

The region spanning 185 to 401 is the Rap-GAP domain; it reads LLVLEEQEGS…RTLDMLIRSL (217 aa). In terms of domain architecture, CNH spans 483–792; it reads PHEVVCADSW…QLVASRSDIY (310 aa).

Belongs to the GARNL3 family.

The chain is GTPase-activating Rap/Ran-GAP domain-like protein 3 (GARNL3) from Gallus gallus (Chicken).